We begin with the raw amino-acid sequence, 171 residues long: Transcription antitermination protein NusB (171 aa).

Belongs to the NusB family.

Its function is as follows. Involved in transcription antitermination. Required for transcription of ribosomal RNA (rRNA) genes. Binds specifically to the boxA antiterminator sequence of the ribosomal RNA (rrn) operons. This is Transcription antitermination protein NusB from Brucella suis (strain ATCC 23445 / NCTC 10510).